The primary structure comprises 170 residues: Small ribosomal subunit protein uS9 (170 aa).

The protein belongs to the universal ribosomal protein uS9 family.

This Rhodococcus opacus (strain B4) protein is Small ribosomal subunit protein uS9.